The chain runs to 193 residues: Orotate phosphoribosyltransferase (193 aa).

5-phospho-alpha-D-ribose 1-diphosphate is bound at residue 114–122 (EDVITTGGS). Orotate-binding residues include Thr-118 and Arg-146.

The protein belongs to the purine/pyrimidine phosphoribosyltransferase family. PyrE subfamily. Homodimer. Requires Mg(2+) as cofactor.

It carries out the reaction orotidine 5'-phosphate + diphosphate = orotate + 5-phospho-alpha-D-ribose 1-diphosphate. Its pathway is pyrimidine metabolism; UMP biosynthesis via de novo pathway; UMP from orotate: step 1/2. Functionally, catalyzes the transfer of a ribosyl phosphate group from 5-phosphoribose 1-diphosphate to orotate, leading to the formation of orotidine monophosphate (OMP). The chain is Orotate phosphoribosyltransferase from Chlorobaculum parvum (strain DSM 263 / NCIMB 8327) (Chlorobium vibrioforme subsp. thiosulfatophilum).